Reading from the N-terminus, the 67-residue chain is Small ribosomal subunit protein eS31 (67 aa).

Cys-31, Cys-34, Cys-49, and Cys-52 together coordinate Zn(2+). The C4-type zinc finger occupies 31 to 52 (CPKCGAGVFMAEHLNRFACGKC).

It belongs to the eukaryotic ribosomal protein eS31 family. Part of the 30S ribosomal subunit. Zn(2+) is required as a cofactor.

In Methanococcus maripaludis (strain C6 / ATCC BAA-1332), this protein is Small ribosomal subunit protein eS31.